A 226-amino-acid polypeptide reads, in one-letter code: MNHIVANKIQQILGYTFTHQELLKQALTHRSASSKHNERLEFLGDSILSFVIANALYQHFPYIDEGDMSRMRATLVRGNTLAEIAYEFDLGEYLQLGQGELKSGGFRRESILANTVEALIGSIYLDSNIKTVEELILKWYEKRLEKISPGDTQKDPKTRLQEYLQSKHLSLPSYFIVEVYGEAHNQLFTIHCEVSTLSTSFIGKGTSRRKAEQDAARKALIKLGVE.

Positions 6–128 constitute an RNase III domain; the sequence is ANKIQQILGY…LIGSIYLDSN (123 aa). Position 41 (E41) interacts with Mg(2+). The active site involves D45. Mg(2+) is bound by residues N114 and E117. E117 is a catalytic residue. The 71-residue stretch at 155-225 folds into the DRBM domain; it reads DPKTRLQEYL…ARKALIKLGV (71 aa).

This sequence belongs to the ribonuclease III family. In terms of assembly, homodimer. It depends on Mg(2+) as a cofactor.

It is found in the cytoplasm. It catalyses the reaction Endonucleolytic cleavage to 5'-phosphomonoester.. Functionally, digests double-stranded RNA. Involved in the processing of primary rRNA transcript to yield the immediate precursors to the large and small rRNAs (23S and 16S). Processes some mRNAs, and tRNAs when they are encoded in the rRNA operon. Processes pre-crRNA and tracrRNA of type II CRISPR loci if present in the organism. In Buchnera aphidicola subsp. Schizaphis graminum (strain Sg), this protein is Ribonuclease 3.